We begin with the raw amino-acid sequence, 78 residues long: Small ribosomal subunit protein bS18A (78 aa).

It belongs to the bacterial ribosomal protein bS18 family. As to quaternary structure, part of the 30S ribosomal subunit. Forms a tight heterodimer with protein bS6.

Its function is as follows. Binds as a heterodimer with protein bS6 to the central domain of the 16S rRNA, where it helps stabilize the platform of the 30S subunit. In Streptomyces avermitilis (strain ATCC 31267 / DSM 46492 / JCM 5070 / NBRC 14893 / NCIMB 12804 / NRRL 8165 / MA-4680), this protein is Small ribosomal subunit protein bS18A.